The primary structure comprises 369 residues: MAKFELYAEVDVSISGHQYPIIICRNGLIDPELINRFITSKQVLIVTNRTVAPLYLGHLQSGLPSKQCDVVILEDGEEHKNQRSLFTIYDSLIQNKHHRDTSIIALGGGVIGDMAGFAASTYQRGVRFIQLPTTLLAQVDASVGGKTAINHPAGKNMIGSFYQPQAVIIDLNTLKTLPEREFRAGIAEMIKYALLVGGPFFERIQAVLQQGLTVHSPELPLLIAECCQVKAKIVEQDERESGLRALLNLGHTFAHALETYTDYKKWLHGEAVAIGLYCAAVLSEKKGLLDKPIVDQVEKMLIHAGLPHKIPNSIDLIQLRELMSLDKKIKNNCLRFVMIKKPGACYIDDSVTEDCLHNTLINVVEGEQK.

Residues Asp-75–Lys-80, Gly-109–Asp-113, Thr-133–Thr-134, Lys-146, Lys-155, and Thr-173–Thr-176 contribute to the NAD(+) site. Residues Glu-188, His-251, and His-268 each coordinate Zn(2+).

It belongs to the sugar phosphate cyclases superfamily. Dehydroquinate synthase family. The cofactor is Co(2+). It depends on Zn(2+) as a cofactor. NAD(+) serves as cofactor.

The protein resides in the cytoplasm. It carries out the reaction 7-phospho-2-dehydro-3-deoxy-D-arabino-heptonate = 3-dehydroquinate + phosphate. Its pathway is metabolic intermediate biosynthesis; chorismate biosynthesis; chorismate from D-erythrose 4-phosphate and phosphoenolpyruvate: step 2/7. In terms of biological role, catalyzes the conversion of 3-deoxy-D-arabino-heptulosonate 7-phosphate (DAHP) to dehydroquinate (DHQ). The sequence is that of 3-dehydroquinate synthase from Legionella pneumophila (strain Corby).